The following is a 344-amino-acid chain: Selenide, water dikinase (344 aa).

Residue Cys-16 is part of the active site. ATP contacts are provided by residues Lys-19 and 47–49; that span reads SRD. Position 50 (Asp-50) interacts with Mg(2+). Residues Asp-67, Asp-90, and 138–140 contribute to the ATP site; that span reads GHS. Asp-90 serves as a coordination point for Mg(2+). Position 226 (Asp-226) interacts with Mg(2+).

This sequence belongs to the selenophosphate synthase 1 family. Class I subfamily. As to quaternary structure, homodimer. It depends on Mg(2+) as a cofactor.

The catalysed reaction is hydrogenselenide + ATP + H2O = selenophosphate + AMP + phosphate + 2 H(+). Its function is as follows. Synthesizes selenophosphate from selenide and ATP. The sequence is that of Selenide, water dikinase from Pseudomonas putida (strain ATCC 47054 / DSM 6125 / CFBP 8728 / NCIMB 11950 / KT2440).